Here is a 453-residue protein sequence, read N- to C-terminus: Probable glycine dehydrogenase (decarboxylating) subunit 1 (453 aa).

Belongs to the GcvP family. N-terminal subunit subfamily. The glycine cleavage system is composed of four proteins: P, T, L and H. In this organism, the P 'protein' is a heterodimer of two subunits.

The catalysed reaction is N(6)-[(R)-lipoyl]-L-lysyl-[glycine-cleavage complex H protein] + glycine + H(+) = N(6)-[(R)-S(8)-aminomethyldihydrolipoyl]-L-lysyl-[glycine-cleavage complex H protein] + CO2. In terms of biological role, the glycine cleavage system catalyzes the degradation of glycine. The P protein binds the alpha-amino group of glycine through its pyridoxal phosphate cofactor; CO(2) is released and the remaining methylamine moiety is then transferred to the lipoamide cofactor of the H protein. The polypeptide is Probable glycine dehydrogenase (decarboxylating) subunit 1 (Erythrobacter litoralis (strain HTCC2594)).